A 114-amino-acid chain; its full sequence is uncharacterized protein (114 aa).

The segment at 1-37 is disordered; the sequence is MLKKILSLFKKEEPKTEEKPTEVEEKKEEREEKEEKK. The span at 9–37 shows a compositional bias: basic and acidic residues; the sequence is FKKEEPKTEEKPTEVEEKKEEREEKEEKK.

This is an uncharacterized protein from Aquifex aeolicus (strain VF5).